Consider the following 159-residue polypeptide: Phosphopantetheine adenylyltransferase (159 aa).

Residue serine 10 coordinates substrate. Residues 10-11 (SF) and histidine 18 each bind ATP. Residues lysine 42, leucine 77, and lysine 91 each contribute to the substrate site. ATP-binding positions include 92–94 (GIR), glutamate 102, and 126–132 (NAHVSSS).

This sequence belongs to the bacterial CoaD family. Homohexamer. Requires Mg(2+) as cofactor.

The protein localises to the cytoplasm. The catalysed reaction is (R)-4'-phosphopantetheine + ATP + H(+) = 3'-dephospho-CoA + diphosphate. Its pathway is cofactor biosynthesis; coenzyme A biosynthesis; CoA from (R)-pantothenate: step 4/5. Reversibly transfers an adenylyl group from ATP to 4'-phosphopantetheine, yielding dephospho-CoA (dPCoA) and pyrophosphate. The chain is Phosphopantetheine adenylyltransferase from Leifsonia xyli subsp. xyli (strain CTCB07).